The chain runs to 776 residues: Venom dipeptidyl peptidase 4 (776 aa).

Positions Met-1–Ala-19 are cleaved as a signal peptide. Asn-44, Asn-66, and Asn-329 each carry an N-linked (GlcNAc...) asparagine glycan. 2 cysteine pairs are disulfide-bonded: Cys-449-Cys-452 and Cys-462-Cys-480. Asn-504 and Asn-577 each carry an N-linked (GlcNAc...) asparagine glycan. Catalysis depends on Ser-638, which acts as the Charge relay system. An intrachain disulfide couples Cys-658 to Cys-769. An N-linked (GlcNAc...) asparagine glycan is attached at Asn-693. Active-site charge relay system residues include Asp-717 and His-749.

Belongs to the peptidase S9B family. DPPIV subfamily. In terms of tissue distribution, expressed by the venom gland.

Its subcellular location is the secreted. The catalysed reaction is Release of an N-terminal dipeptide, Xaa-Yaa-|-Zaa-, from a polypeptide, preferentially when Yaa is Pro, provided Zaa is neither Pro nor hydroxyproline.. Functionally, venom dipeptidyl-peptidase which removes N-terminal dipeptides sequentially from polypeptides having unsubstituted N-termini provided that the penultimate residue is proline. May process venom proteins into their active forms and/or modulate the chemotactic activity of immune cells after the insect sting. This Vespa velutina (Asian yellow-legged hornet) protein is Venom dipeptidyl peptidase 4.